Reading from the N-terminus, the 67-residue chain is Large ribosomal subunit protein uL29 (67 aa).

It belongs to the universal ribosomal protein uL29 family.

This chain is Large ribosomal subunit protein uL29, found in Gemmatimonas aurantiaca (strain DSM 14586 / JCM 11422 / NBRC 100505 / T-27).